Consider the following 41-residue polypeptide: Photosystem II reaction center protein Y (41 aa).

M1 bears the N-formylmethionine mark. Residues M1 to R4 lie on the Lumenal side of the membrane. Residues V5–I23 traverse the membrane as a helical segment. Over L24–A41 the chain is Cytoplasmic.

Belongs to the PsbY family. In terms of assembly, PSII is composed of 1 copy each of membrane proteins PsbA, PsbB, PsbC, PsbD, PsbE, PsbF, PsbH, PsbI, PsbJ, PsbK, PsbL, PsbM, PsbT, PsbX, PsbY, PsbZ, Psb30/Ycf12, peripheral proteins PsbO, CyanoQ (PsbQ), PsbU, PsbV and a large number of cofactors. It forms dimeric complexes. This protein is only loosely associated with PSII, and is not often found in crystals. Found on the exterior of the PSII dimer, near cytochrome b559 (psbE and psbF). PSII binds multiple chlorophylls, carotenoids and specific lipids. is required as a cofactor.

It localises to the cellular thylakoid membrane. Its function is as follows. Loosely associated component of the core of photosystem II, it is not always seen in crystals. PSII is a light-driven water plastoquinone oxidoreductase, using light energy to abstract electrons from H(2)O, generating a proton gradient subsequently used for ATP formation. The sequence is that of Photosystem II reaction center protein Y from Thermosynechococcus vestitus (strain NIES-2133 / IAM M-273 / BP-1).